Here is a 274-residue protein sequence, read N- to C-terminus: 3-methyl-2-oxobutanoate hydroxymethyltransferase (274 aa).

The Mg(2+) site is built by Asp49 and Asp88. Residues Asp49–Ser50, Asp88, and Lys118 contribute to the 3-methyl-2-oxobutanoate site. Glu120 is a Mg(2+) binding site. The active-site Proton acceptor is Glu187.

Belongs to the PanB family. As to quaternary structure, homodecamer; pentamer of dimers. Requires Mg(2+) as cofactor.

It is found in the cytoplasm. The catalysed reaction is 3-methyl-2-oxobutanoate + (6R)-5,10-methylene-5,6,7,8-tetrahydrofolate + H2O = 2-dehydropantoate + (6S)-5,6,7,8-tetrahydrofolate. The protein operates within cofactor biosynthesis; (R)-pantothenate biosynthesis; (R)-pantoate from 3-methyl-2-oxobutanoate: step 1/2. Its function is as follows. Catalyzes the reversible reaction in which hydroxymethyl group from 5,10-methylenetetrahydrofolate is transferred onto alpha-ketoisovalerate to form ketopantoate. This Rhodopseudomonas palustris (strain BisB5) protein is 3-methyl-2-oxobutanoate hydroxymethyltransferase.